A 212-amino-acid polypeptide reads, in one-letter code: Large ribosomal subunit protein uL3 (212 aa).

Polar residues predominate over residues 135–155; that stretch reads ATHGNSVSHRAHGSTGQNQSP. The disordered stretch occupies residues 135–162; sequence ATHGNSVSHRAHGSTGQNQSPGKVFKGK. Glutamine 153 carries the N5-methylglutamine modification.

The protein belongs to the universal ribosomal protein uL3 family. As to quaternary structure, part of the 50S ribosomal subunit. Forms a cluster with proteins L14 and L19. In terms of processing, methylated by PrmB.

Functionally, one of the primary rRNA binding proteins, it binds directly near the 3'-end of the 23S rRNA, where it nucleates assembly of the 50S subunit. The sequence is that of Large ribosomal subunit protein uL3 from Psychrobacter arcticus (strain DSM 17307 / VKM B-2377 / 273-4).